The primary structure comprises 180 residues: MGENEPIHIEYADETELLTEFRQYMADPDTREKAANYLLDSLVDEMILGVVFEVHHAYKTGSGAAIEGQPEDCKPYTIVDLPDMDVFGSSNSKKAIDCSCPNCNRIVAASRFAPHLEKCMGMGRNSSRIASRRIANTRDGGNYFGADEDDEDDADWSGEKRKKKIAPVRTNGSKKNGKTS.

The segment at 98–119 (CSCPNCNRIVAASRFAPHLEKC) adopts an SGF11-type zinc-finger fold. The disordered stretch occupies residues 138 to 180 (RDGGNYFGADEDDEDDADWSGEKRKKKIAPVRTNGSKKNGKTS). Residues 146 to 156 (ADEDDEDDADW) are compositionally biased toward acidic residues.

Belongs to the SGF11 family. Component of some SAGA transcription coactivator-HAT complexes. Within the SAGA complex, participates in a subcomplex of SAGA called the DUB module (deubiquitination module).

The protein resides in the nucleus. Functionally, component of the transcription regulatory histone acetylation (HAT) complex SAGA, a multiprotein complex that activates transcription by remodeling chromatin and mediating histone acetylation and deubiquitination. Within the SAGA complex, participates in a subcomplex that specifically deubiquitinates histone H2B. The SAGA complex is recruited to specific gene promoters by activators, where it is required for transcription. This chain is SAGA-associated factor 11 homolog, found in Aedes aegypti (Yellowfever mosquito).